The sequence spans 298 residues: Putative glycylpeptide N-tetradecanoyltransferase (298 aa).

Belongs to the NMT family.

The catalysed reaction is N-terminal glycyl-[protein] + tetradecanoyl-CoA = N-tetradecanoylglycyl-[protein] + CoA + H(+). Functionally, adds a myristoyl group to the N-terminal glycine residue of certain proteins. The sequence is that of Putative glycylpeptide N-tetradecanoyltransferase from Melanoplus sanguinipes (Migratory grasshopper).